A 79-amino-acid polypeptide reads, in one-letter code: RNA-binding protein Hfq (79 aa).

One can recognise a Sm domain in the interval 10–70 (DVFLNTVRKQ…ISTIMPGQPV (61 aa)).

The protein belongs to the Hfq family. In terms of assembly, homohexamer.

Its function is as follows. RNA chaperone that binds small regulatory RNA (sRNAs) and mRNAs to facilitate mRNA translational regulation in response to envelope stress, environmental stress and changes in metabolite concentrations. Also binds with high specificity to tRNAs. This chain is RNA-binding protein Hfq, found in Bartonella quintana (strain Toulouse) (Rochalimaea quintana).